Here is a 174-residue protein sequence, read N- to C-terminus: dCTP deaminase, dUMP-forming (174 aa).

Residues 93-98 (RSSIGR), Asp-111, 119-121 (TLE), Gln-138, and Tyr-151 contribute to the dCTP site. The Proton donor/acceptor role is filled by Glu-121.

The protein belongs to the dCTP deaminase family. As to quaternary structure, homotrimer.

The catalysed reaction is dCTP + 2 H2O = dUMP + NH4(+) + diphosphate. The protein operates within pyrimidine metabolism; dUMP biosynthesis; dUMP from dCTP: step 1/1. Its function is as follows. Bifunctional enzyme that catalyzes both the deamination of dCTP to dUTP and the hydrolysis of dUTP to dUMP without releasing the toxic dUTP intermediate. This chain is dCTP deaminase, dUMP-forming, found in Leptospira biflexa serovar Patoc (strain Patoc 1 / Ames).